The primary structure comprises 3117 residues: Centrosome-associated protein 350 (3117 aa).

Positions 1 to 24 are disordered; that stretch reads MRSSKSKEVPLPNPRNSQSKDTVQ. The span at 14–24 shows a compositional bias: polar residues; it reads PRNSQSKDTVQ. Residues Ser-86, Ser-139, Ser-142, and Ser-218 each carry the phosphoserine modification. Disordered regions lie at residues 249-275, 436-514, 548-625, and 671-722; these read PKALRLTDSSPSSTSTSNSQRLDILKR, ILGP…NKQE, TVEL…TEQK, and LEEP…PPQP. The segment covering 255 to 267 has biased composition (low complexity); sequence TDSSPSSTSTSNS. Residues 469–501 are compositionally biased toward basic and acidic residues; it reads GRAESDPRLDVLHRHLQRNSERSRSKSRSENNI. Phosphoserine is present on residues Ser-473 and Ser-507. A compositionally biased stretch (basic residues) spans 563–573; the sequence is PRSHSPVKRKP. Basic and acidic residues-rich tracts occupy residues 591–625 and 694–703; these read YDTDEVRQYIVRQQEERKRKQNEEKKAQKEATEQK and ESDKENKVQE. Residues 598-645 are a coiled coil; it reads QYIVRQQEERKRKQNEEKKAQKEATEQKNKRLQELYRKQKEAFTKVKN. A Phosphoserine modification is found at Ser-695. Low complexity predominate over residues 705–718; sequence PPSASSSSDMSLSE. Thr-878 is modified (phosphothreonine). At Ser-939 the chain carries Phosphoserine. Residues 981 to 992 show a composition bias toward low complexity; the sequence is SVSEGPLLSEGS. Residues 981-1002 are disordered; sequence SVSEGPLLSEGSLSEEEGDQDG. Ser-1061 carries the post-translational modification Phosphoserine. Residues 1081-1298 form a disordered region; that stretch reads EDKLDRGTST…GFKPNAPLTD (218 aa). The segment covering 1087–1102 has biased composition (polar residues); it reads GTSTSRPLNATATPLS. The span at 1135 to 1144 shows a compositional bias: basic and acidic residues; it reads QEDHSNRKSA. 2 stretches are compositionally biased toward low complexity: residues 1153–1172 and 1251–1267; these read TSQHSSGAQSAASSRSSTSS and QKTPTSPLSPSSQKSLQ. Thr-1253 carries the phosphothreonine modification. Phosphoserine is present on residues Ser-1256 and Ser-1259. The span at 1272-1283 shows a compositional bias: polar residues; the sequence is GTSSERSKSSVM. Positions 1369 to 1411 form a coiled coil; that stretch reads IKAQQQRHERDLALLKLKAEQEALESQRQLEETRNKAAQVHAE. Disordered stretches follow at residues 1494-1674 and 1794-1854; these read TRTE…GGQD and KLKS…SRMD. Residues 1503–1512 show a composition bias toward polar residues; the sequence is PSVSLSQSKE. Low complexity-rich tracts occupy residues 1522–1535 and 1543–1556; these read YSASYDSYSESSGY and SSGSSRQESPSVPS. Positions 1558–1571 are enriched in basic and acidic residues; that stretch reads KENEKKLNGEKIES. The residue at position 1613 (Ser-1613) is a Phosphoserine. The span at 1631 to 1647 shows a compositional bias: basic and acidic residues; it reads ESHRRFNMEKRRGHHDD. Phosphoserine occurs at positions 1648 and 1653. Residues 1707-1800 adopt a coiled-coil conformation; it reads KALKEKTKAE…LQEKLKSAGE (94 aa). The span at 1794 to 1815 shows a compositional bias: basic and acidic residues; that stretch reads KLKSAGESKLDSHSDDDTKDNK. Position 1818 is a phosphoserine (Ser-1818). Residues 1827 to 1841 show a composition bias toward low complexity; that stretch reads RSPSPISISSSETSS. Residues 1856–1899 are a coiled coil; it reads KFLTKREQKLMQRRQHAEELLEWKRRLDAEEAEIRQMEKQALAA. Basic and acidic residues predominate over residues 1903–1925; sequence ELIKPKTPKKELEDQRTEQKEIA. Disordered stretches follow at residues 1903 to 2020, 2107 to 2221, 2329 to 2356, and 2407 to 2432; these read ELIK…QCHL, ELSQ…ESGD, LKERQSDQDMNHSPNIQSGKDIHEQKNT, and KDSQSCRDKPQPMRSSTSGATSFGSN. Ser-1936 is subject to Phosphoserine. Residues 1983–2005 are compositionally biased toward polar residues; it reads ELESSTSPSKHSLPKSCTSVSKQ. Residues 2051–2110 adopt a coiled-coil conformation; it reads EGRIRALKDELRKRKSVVNQLKKEQKKRQKERLKAQEASLIKQLESYDEFIKKTEAELSQ. Residues 2111–2129 are compositionally biased toward polar residues; the sequence is DLETSPTAKPQIKTLSSAS. Ser-2115 carries the post-translational modification Phosphoserine. A compositionally biased stretch (basic and acidic residues) spans 2141–2170; it reads HRSETAKNWKSLTESERSRGSLESIAEHVD. A compositionally biased stretch (polar residues) spans 2173–2184; sequence LSGSERSVSERS. Residues 2191 to 2201 are compositionally biased toward basic and acidic residues; it reads RVNEWDSRTED. At Thr-2204 the chain carries Phosphothreonine. The residue at position 2206 (Ser-2206) is a Phosphoserine. Composition is skewed to basic and acidic residues over residues 2329–2338 and 2407–2417; these read LKERQSDQDM and KDSQSCRDKPQ. The span at 2419-2432 shows a compositional bias: polar residues; it reads MRSSTSGATSFGSN. Phosphoserine occurs at positions 2431 and 2460. Over residues 2465–2478 the composition is skewed to basic and acidic residues; it reads MKSKERSDVEHEQQ. The segment at 2465 to 2485 is disordered; the sequence is MKSKERSDVEHEQQVTESPSL. In terms of domain architecture, CAP-Gly spans 2517 to 2559; it reads GETSFAKGFWAGVELDKPEGNNNGTYDGIAYFECKEKHGIFAP. Thr-2689 carries the post-translational modification Phosphothreonine. A coiled-coil region spans residues 2719–2752; it reads LLDLLTREKNQLEAQLKSSLNEEKKSKQQLEKIS. Phosphoserine is present on residues Ser-2830 and Ser-2839.

In terms of assembly, part of a ternary complex that contains CEP350, CEP43 and MAPRE1. Interacts (via C-terminus) directly with CEP43 (via N-terminus). Interacts with NR1H3, PPARA, PPARD and PPARG. Interacts directly with microtubules. Interacts with the fusion protein CEP43-FGFR1, and by doing so recruits and activates PI3K and PLC-gamma. Interacts with CYLD. Interacts with CFAP157. Interacts with CEP19 (via C-terminus). Interacts with CEP78; promoting CEP78 localization to centrosome and centriole. Post-translationally, phosphorylated during mitosis. As to expression, detected in heart, brain, skeletal muscle, testis, placenta, lung, liver, kidney and pancreas.

The protein localises to the cytoplasm. The protein resides in the cytoskeleton. It is found in the microtubule organizing center. It localises to the centrosome. Its subcellular location is the spindle. The protein localises to the nucleus. The protein resides in the centriole. It is found in the cilium basal body. Its function is as follows. Plays an essential role in centriole growth by stabilizing a procentriolar seed composed of at least, SASS6 and CPAP. Required for anchoring microtubules to the centrosomes and for the integrity of the microtubule network. Recruits PPARA to discrete subcellular compartments and thereby modulates PPARA activity. Required for ciliation. This Homo sapiens (Human) protein is Centrosome-associated protein 350.